The following is an 878-amino-acid chain: Alanine--tRNA ligase (878 aa).

Zn(2+)-binding residues include histidine 567, histidine 571, cysteine 669, and histidine 673.

This sequence belongs to the class-II aminoacyl-tRNA synthetase family. Zn(2+) is required as a cofactor.

Its subcellular location is the cytoplasm. The enzyme catalyses tRNA(Ala) + L-alanine + ATP = L-alanyl-tRNA(Ala) + AMP + diphosphate. Functionally, catalyzes the attachment of alanine to tRNA(Ala) in a two-step reaction: alanine is first activated by ATP to form Ala-AMP and then transferred to the acceptor end of tRNA(Ala). Also edits incorrectly charged Ser-tRNA(Ala) and Gly-tRNA(Ala) via its editing domain. The protein is Alanine--tRNA ligase of Rickettsia canadensis (strain McKiel).